A 333-amino-acid chain; its full sequence is Ketol-acid reductoisomerase (NADP(+)) (333 aa).

Positions 1–179 (MFYDDDADLT…GGTRAGVIKT (179 aa)) constitute a KARI N-terminal Rossmann domain. Residues 22-25 (YGSQ), Lys45, Ser48, Ser50, and 80-83 (DTAQ) each bind NADP(+). Residue His105 is part of the active site. Residue Gly131 participates in NADP(+) binding. Residues 180 to 325 (TFKDETETDL…KRLRDLMSWV (146 aa)) form the KARI C-terminal knotted domain. Residues Asp188, Glu192, Glu224, and Glu228 each contribute to the Mg(2+) site. Ser249 provides a ligand contact to substrate.

This sequence belongs to the ketol-acid reductoisomerase family. Mg(2+) is required as a cofactor.

The enzyme catalyses (2R)-2,3-dihydroxy-3-methylbutanoate + NADP(+) = (2S)-2-acetolactate + NADPH + H(+). It catalyses the reaction (2R,3R)-2,3-dihydroxy-3-methylpentanoate + NADP(+) = (S)-2-ethyl-2-hydroxy-3-oxobutanoate + NADPH + H(+). It functions in the pathway amino-acid biosynthesis; L-isoleucine biosynthesis; L-isoleucine from 2-oxobutanoate: step 2/4. Its pathway is amino-acid biosynthesis; L-valine biosynthesis; L-valine from pyruvate: step 2/4. Functionally, involved in the biosynthesis of branched-chain amino acids (BCAA). Catalyzes an alkyl-migration followed by a ketol-acid reduction of (S)-2-acetolactate (S2AL) to yield (R)-2,3-dihydroxy-isovalerate. In the isomerase reaction, S2AL is rearranged via a Mg-dependent methyl migration to produce 3-hydroxy-3-methyl-2-ketobutyrate (HMKB). In the reductase reaction, this 2-ketoacid undergoes a metal-dependent reduction by NADPH to yield (R)-2,3-dihydroxy-isovalerate. The protein is Ketol-acid reductoisomerase (NADP(+)) of Mycobacterium avium (strain 104).